Reading from the N-terminus, the 955-residue chain is Anoctamin-4 (955 aa).

The Cytoplasmic portion of the chain corresponds to 1-352 (MEASSSGITN…FGEKIGLYFA (352 aa)). The tract at residues 73–97 (KDDDSLLHPGNLTSTSEDTSRLEAG) is disordered. Residues 353 to 373 (WLGWYTGMLFPAAFIGLFVFL) form a helical membrane-spanning segment. Residues 374-424 (YGVTTLDHCQVSKEVCQATDIIMCPVCDKYCPFMRLSDSCVYAKVTHLFDN) lie on the Extracellular side of the membrane. The chain crosses the membrane as a helical span at residues 425 to 445 (GATVFFAVFMAVWATVFLEFW). Residues 446–505 (KRRRAVIAYDWDLIDWEEEEEEIRPQFEAKYSKKERMNPISGKPEPYQAFTDKCSRLIVS) lie on the Cytoplasmic side of the membrane. The helical transmembrane segment at 506–526 (ASGIFFMICVVIAAVFGIVIY) threads the bilayer. Over 527-547 (RVVTVSTFAAFKWALIRNNSQ) the chain is Extracellular. N544 carries N-linked (GlcNAc...) asparagine glycosylation. A helical membrane pass occupies residues 548–568 (VATTGTAVCINFCIIMLLNVL). Residues 569-595 (YEKVALLLTNLEQPRTESEWENSFTLK) are Cytoplasmic-facing. Residues 596 to 616 (MFLFQFVNLNSSTFYIAFFLG) traverse the membrane as a helical segment. Residues 617–715 (RFTGHPGAYL…AYGLFDEYLE (99 aa)) are Extracellular-facing. The chain crosses the membrane as a helical span at residues 716–736 (MILQFGFTTIFVAAFPLAPLL). The Cytoplasmic portion of the chain corresponds to 737 to 768 (ALLNNIIEIRLDAYKFVTQWRRPLASRAKDIG). Residues 769 to 789 (IWYGILEGIGILSVITNAFVI) traverse the membrane as a helical segment. Topologically, residues 790 to 885 (AITSDFIPRL…QFWHVLAARL (96 aa)) are extracellular. N-linked (GlcNAc...) asparagine glycans are attached at residues N824 and N837. Residues 886-906 (AFIIVFEHLVFCIKHLISYLI) form a helical membrane-spanning segment. Residues 907 to 955 (PDLPKDLRDRMRREKYLIQEMMYEAELERLQKERKERKKNGKAHHNEWP) lie on the Cytoplasmic side of the membrane.

Belongs to the anoctamin family. As to expression, predominantly expressed in neuronal tissues. Expressed at low levels in ovary, uterus, heart and brain.

It is found in the cell membrane. It carries out the reaction a 1,2-diacyl-sn-glycero-3-phospho-L-serine(in) = a 1,2-diacyl-sn-glycero-3-phospho-L-serine(out). The enzyme catalyses a beta-D-galactosyl-(1&lt;-&gt;1')-N-acylsphing-4-enine(out) = a beta-D-galactosyl-(1&lt;-&gt;1')-N-acylsphing-4-enine(in). The catalysed reaction is a 1,2-diacyl-sn-glycero-3-phosphocholine(in) = a 1,2-diacyl-sn-glycero-3-phosphocholine(out). In terms of biological role, has calcium-dependent phospholipid scramblase activity; scrambles phosphatidylserine, phosphatidylcholine and galactosylceramide. Does not exhibit calcium-activated chloride channel (CaCC) activity. This chain is Anoctamin-4, found in Mus musculus (Mouse).